The following is a 4062-amino-acid chain: Transcription-associated protein 1 (4062 aa).

The tract at residues 531–562 is disordered; that stretch reads LASEPSTSEDADESGGDPNKLPPPTKEGKKTS. TPR repeat units follow at residues 1346–1379 and 1677–1714; these read LDGVQNYMFNCPDGFDFEKDMDMYKRYLSHLLDI and RRSFIRRIIVYQSSGPLRQEFMDTPEYFEKLIDLDDEE. Residues 2659–2670 are compositionally biased toward basic and acidic residues; sequence VETEMKREEPEP. The disordered stretch occupies residues 2659-2692; sequence VETEMKREEPEPMEVDEKDSQDDSKDAGEPKEKE. Over residues 2671 to 2680 the composition is skewed to acidic residues; that stretch reads MEVDEKDSQD. The segment covering 2681-2692 has biased composition (basic and acidic residues); the sequence is DSKDAGEPKEKE. The 612-residue stretch at 2800 to 3411 folds into the FAT domain; that stretch reads LIEFISSKHE…FYHIREAVSV (612 aa). The TPR 3 repeat unit spans residues 2847-2880; sequence IETLESLGTLYNEISEFDQFAAIWERRAVFPDTM. Positions 3682–4046 constitute a PI3K/PI4K catalytic domain; sequence EPNFEIVIKG…DCVSLISRAK (365 aa). The G-loop stretch occupies residues 3688–3694; the sequence is VIKGGQV. The catalytic loop stretch occupies residues 3902–3910; that stretch reads NLTPMGPDQ. The activation loop stretch occupies residues 3922 to 3950; the sequence is NPSYRFEIRGGRSLHDIQHFGHEVPFRLT. One can recognise an FATC domain in the interval 4031–4062; it reads AKLRKDDCVSLISRAKDSDNLARMPPTYHAWF.

It belongs to the PI3/PI4-kinase family. TRA1 subfamily. In terms of assembly, interacts with histone acetyltransferase Tip60 homolog mys-1. Probably a component of a complex with histone acetyltransferase (HAT) activity, at least composed of mys-1 and trr-1. In terms of tissue distribution, expressed in germ cells and somatic cells.

The protein localises to the nucleus. The protein resides in the chromosome. In terms of biological role, influences germ cell fate in hermaphrodites. Acts downstream of tra-2 and tra-3 and through the Tip60 histone acetyltransferase complex to regulate germ cell fate decisions. Required for spermatogenesis and embryonic development. Acts with tra-2 to promote expression of fog-3 and control male tail development. Involved in the negative regulation of vulval development. Involved in the positive regulation of transcription factor daf-16, probably acting by histone acetylation; thereby modulating stress resistance. Plays a role in acetylation of nucleosomal histone H4, probably acting as a component of the Tip60 histone acetyltransferase complex. The chain is Transcription-associated protein 1 from Caenorhabditis elegans.